We begin with the raw amino-acid sequence, 707 residues long: Probable potassium transporter 17 (707 aa).

Residues 1 to 25 (MDLEAGSIRPRSDGEGGGPAAGRET) form a disordered region. At 1–34 (MDLEAGSIRPRSDGEGGGPAAGRETDDSNVWKDL) the chain is on the cytoplasmic side. The helical transmembrane segment at 35–55 (FLAYKTLGVVFGGLVTSPLYV) threads the bilayer. Over 56-71 (YPSMNLSSPTEADYLG) the chain is Extracellular. N60 carries an N-linked (GlcNAc...) asparagine glycan. The chain crosses the membrane as a helical span at residues 72–92 (IYSIMFWTLTLIGVVKYVCIA). Residues 93 to 157 (LNADDHGEGG…FFEQSITARR (65 aa)) are Cytoplasmic-facing. A helical transmembrane segment spans residues 158–178 (VLLFVAVLGMCMLIGDGILTP). Over 179–194 (AISVLSAIDGIRGPFP) the chain is Extracellular. The helical transmembrane segment at 195–215 (TVSKPVVEALSAAILIGLFLL) threads the bilayer. The Cytoplasmic portion of the chain corresponds to 216–222 (QKYGTSK). Residues 223-243 (VSFLFSPIMAAWTFTTPIIGL) form a helical membrane-spanning segment. Residues 244–276 (YSIVHYYPGIFKAISPYYIVHFFLRNKRQGWQL) lie on the Extracellular side of the membrane. A helical membrane pass occupies residues 277 to 297 (LGGTVLCITGAEAMFADLGHF). At 298 to 305 (SKKAIQIA) the chain is on the cytoplasmic side. The helical transmembrane segment at 306–326 (FLSSIYPSLVLTYAGQTAYLI) threads the bilayer. Topologically, residues 327–343 (NNVNDFGDGFYKFVPRP) are extracellular. A helical membrane pass occupies residues 344–364 (VYWPMFVVATLAAIVASQSLI). Topologically, residues 365–402 (SATFSVIKQSVVLDYFPRVKVVHTSQHKEGEVYSPEIN) are cytoplasmic. Residues 403–423 (YILMVLCVGVILGFGGGKAIG) traverse the membrane as a helical segment. Residues 424–427 (NAFG) are Extracellular-facing. A helical membrane pass occupies residues 428-448 (VVVIMVMLITTVLLTLVMIII). Over 449–454 (WRTPLV) the chain is Cytoplasmic. A helical transmembrane segment spans residues 455–475 (LAGLYFVPFFIMEGAYVSAVF). The Extracellular portion of the chain corresponds to 476 to 480 (TKIPE). Residues 481 to 501 (GGWLPFAVSITLAMIMFGWYY) form a helical membrane-spanning segment. At 502-707 (GRQRKFEYEM…RVEIGMLYKV (206 aa)) the chain is on the cytoplasmic side.

The protein belongs to the HAK/KUP transporter (TC 2.A.72.3) family.

It is found in the membrane. Its function is as follows. High-affinity potassium transporter. The chain is Probable potassium transporter 17 (HAK17) from Oryza sativa subsp. japonica (Rice).